We begin with the raw amino-acid sequence, 111 residues long: Ferredoxin, 2Fe-2S (111 aa).

[2Fe-2S] cluster is bound by residues Cys-10, Cys-23, Cys-56, and Cys-60.

In terms of assembly, homodimer in solution. Requires [2Fe-2S] cluster as cofactor.

Its function is as follows. Ferredoxins are iron-sulfur proteins that transfer electrons in a wide variety of metabolic reactions. This Aquifex aeolicus (strain VF5) protein is Ferredoxin, 2Fe-2S (fdx4).